The primary structure comprises 271 residues: Aminoglycoside 3'-phosphotransferase (271 aa).

Asp198 acts as the Proton acceptor in catalysis.

It belongs to the aminoglycoside phosphotransferase family.

The catalysed reaction is kanamycin A + ATP = kanamycin 3'-phosphate + ADP + H(+). Resistance to kanamycin and structurally-related aminoglycosides, including amikacin. In Escherichia coli, this protein is Aminoglycoside 3'-phosphotransferase (aphA1).